The chain runs to 86 residues: Anti-adapter protein IraP (86 aa).

The stretch at 1–36 (MKNLIAELLFKLAQKEEESKELCAQVEALEIIVTAM) forms a coiled coil.

It belongs to the IraP family. Interacts with RssB.

It is found in the cytoplasm. In terms of biological role, inhibits RpoS proteolysis by regulating RssB activity, thereby increasing the stability of the sigma stress factor RpoS especially during phosphate starvation, but also in stationary phase and during nitrogen starvation. Its effect on RpoS stability is due to its interaction with RssB, which probably blocks the interaction of RssB with RpoS, and the consequent delivery of the RssB-RpoS complex to the ClpXP protein degradation pathway. The sequence is that of Anti-adapter protein IraP from Escherichia coli O7:K1 (strain IAI39 / ExPEC).